The chain runs to 232 residues: Small ribosomal subunit protein uS2 (232 aa).

This sequence belongs to the universal ribosomal protein uS2 family.

The sequence is that of Small ribosomal subunit protein uS2 from Syntrophomonas wolfei subsp. wolfei (strain DSM 2245B / Goettingen).